Here is a 279-residue protein sequence, read N- to C-terminus: Tryptophan 2,3-dioxygenase (279 aa).

Residues 48–52, Tyr-110, and Arg-114 each bind substrate; that span reads FIVIH. His-237 contributes to the heme binding site. Thr-251 provides a ligand contact to substrate.

It belongs to the tryptophan 2,3-dioxygenase family. As to quaternary structure, homotetramer. Requires heme as cofactor.

The catalysed reaction is L-tryptophan + O2 = N-formyl-L-kynurenine. It functions in the pathway amino-acid degradation; L-tryptophan degradation via kynurenine pathway; L-kynurenine from L-tryptophan: step 1/2. Functionally, heme-dependent dioxygenase that catalyzes the oxidative cleavage of the L-tryptophan (L-Trp) pyrrole ring and converts L-tryptophan to N-formyl-L-kynurenine. Catalyzes the oxidative cleavage of the indole moiety. This is Tryptophan 2,3-dioxygenase from Bacillus cereus (strain ATCC 10987 / NRS 248).